Here is a 200-residue protein sequence, read N- to C-terminus: Inner membrane-spanning protein YciB (200 aa).

Transmembrane regions (helical) follow at residues phenylalanine 32–valine 52, valine 56–valine 76, leucine 93–phenylalanine 113, phenylalanine 126–tryptophan 146, and phenylalanine 153–glutamine 173.

It belongs to the YciB family.

It is found in the cell inner membrane. Plays a role in cell envelope biogenesis, maintenance of cell envelope integrity and membrane homeostasis. This is Inner membrane-spanning protein YciB from Afipia carboxidovorans (strain ATCC 49405 / DSM 1227 / KCTC 32145 / OM5) (Oligotropha carboxidovorans).